The primary structure comprises 858 residues: NEDD4-binding protein 1 (858 aa).

Residues 17–37 are disordered; it reads TCTEPPGGRQSPTASRAQPDS. Polar residues predominate over residues 26–37; the sequence is QSPTASRAQPDS. In terms of domain architecture, KH-like spans 96–180; it reads KEDVYKAKEY…VQQFVALFQE (85 aa). Disordered regions lie at residues 262–321 and 388–424; these read EDKT…TWTV and QKTQ…KEKE. Residues 285 to 316 show a composition bias toward basic and acidic residues; it reads RSSESEQRDTKRQYSLERREEEQCEEREREPT. The span at 389-418 shows a compositional bias: polar residues; it reads KTQSTQGAQRTSRTPDPSPCANASSTSTSN. Positions 598–750 constitute an RNase NYN domain; that stretch reads LRHIIIDGSN…LGKHGPHLDE (153 aa). The span at 774-784 shows a compositional bias: polar residues; that stretch reads SVYSQAAQSTA. Residues 774–823 form a disordered region; the sequence is SVYSQAAQSTAHPSSPSHWPHSGPPDWHLPRPSPSPPPQRSPSETTELKR. Positions 785–799 are enriched in low complexity; it reads HPSSPSHWPHSGPPD. Residues 804 to 813 are compositionally biased toward pro residues; that stretch reads RPSPSPPPQR. Residues 813–858 form a coCUN region; sequence RSPSETTELKRKLYDIFPDQKQRIDRILSDNPYMRDLNALSGLLLG.

It belongs to the N4BP1 family.

It localises to the nucleus. The protein resides in the nucleolus. The protein localises to the PML body. Functionally, potent suppressor of cytokine production that acts as a regulator of innate immune signaling and inflammation. Acts as a key negative regulator of select cytokine and chemokine responses elicited by TRIF-independent Toll-like receptors (TLRs), thereby limiting inflammatory cytokine responses to minor insults. Has ribonuclease activity. The polypeptide is NEDD4-binding protein 1 (Danio rerio (Zebrafish)).